The primary structure comprises 93 residues: UPF0058 protein AF_0738 (93 aa).

Belongs to the UPF0058 family.

The sequence is that of UPF0058 protein AF_0738 from Archaeoglobus fulgidus (strain ATCC 49558 / DSM 4304 / JCM 9628 / NBRC 100126 / VC-16).